Reading from the N-terminus, the 151-residue chain is MKKIDVKILDPRVGKEFPLPTYATSGSAGLDLRACLNDAVELAPGDTTLVPTGLAIHIADPSLAAMMLPRSGLGHKHGIVLGNLVGLIDSDYQGQLMISVWNRGQDSFTIQPGERIAQMIFVPVVQAEFNLVEDFDATDRGEGGFGHSGRQ.

Residues 70–72 (RSG), asparagine 83, 87–89 (LID), and methionine 97 each bind substrate.

This sequence belongs to the dUTPase family. As to quaternary structure, homotrimer. The cofactor is Mg(2+).

The catalysed reaction is dUTP + H2O = dUMP + diphosphate + H(+). Its pathway is pyrimidine metabolism; dUMP biosynthesis; dUMP from dCTP (dUTP route): step 2/2. Its function is as follows. This enzyme is involved in nucleotide metabolism: it produces dUMP, the immediate precursor of thymidine nucleotides and it decreases the intracellular concentration of dUTP so that uracil cannot be incorporated into DNA. The protein is Deoxyuridine 5'-triphosphate nucleotidohydrolase of Escherichia coli (strain K12 / MC4100 / BW2952).